Reading from the N-terminus, the 184-residue chain is Ribosome-recycling factor (184 aa).

The protein belongs to the RRF family.

It localises to the cytoplasm. Functionally, responsible for the release of ribosomes from messenger RNA at the termination of protein biosynthesis. May increase the efficiency of translation by recycling ribosomes from one round of translation to another. This chain is Ribosome-recycling factor, found in Leptospira interrogans serogroup Icterohaemorrhagiae serovar copenhageni (strain Fiocruz L1-130).